A 141-amino-acid chain; its full sequence is MTDQRWLIDKSALVRLTDSPDMEIWSNRIERGLVHITGVTRLEVGFSAECGEIARREFREPPLSAMPVEYLTPRIEDRALEVQTLLADRGHHRGPSIPDLLIAATAELSGLTVLHVDKDFDAIAALTGQKTERLTHRPPSA.

Positions 7 to 129 (LIDKSALVRL…FDAIAALTGQ (123 aa)) constitute a PINc domain. 3 residues coordinate Mg(2+): D99, D117, and D119.

It belongs to the PINc/VapC protein family. In terms of assembly, probably active as a homodimer. Mg(2+) is required as a cofactor.

Its function is as follows. Toxic component of a type II toxin-antitoxin (TA) system. Acts as an RNase. All its toxic effects are neutralized by coexpression with cognate antitoxin VapB2. This Mycobacterium tuberculosis (strain CDC 1551 / Oshkosh) protein is Ribonuclease VapC2.